The following is a 36-amino-acid chain: Neurotoxin PRTx26An0C3 (36 aa).

Cystine bridges form between cysteine 3–cysteine 17, cysteine 10–cysteine 22, and cysteine 16–cysteine 34.

Expressed by the venom gland.

It localises to the secreted. Functionally, neurotoxin. Causes spastic paralysis and death in mice. Moderate inhibitor of L-type calcium channels (Cav1/CACNA1). This Phoneutria nigriventer (Brazilian armed spider) protein is Neurotoxin PRTx26An0C3.